The following is a 598-amino-acid chain: MTDLTTSDSLQPAWQTRDHLDDPVIGELSNRFGPEAFVVQATRTGMPVVWVKREQLLEVMSFLRKQPKPYVMLFDLHGVDERLRTHSQGLPDADFSVFYHLLSIERNRDIMLKVALSEKDLHVSTATKIFPNANWYERETWEMFGITFDGHPHLTRIMMPQSWEGHPLRKDYPARATEFDPYVLTKQKEDLEMESLTFKPEDWGMKRGTENEDFMFLNLGPNHPSSHGAFRIVLQLDGEEIIDCVPDVGYHHRGAEKMGERQSWHSYIPYTDRIEYLGGCVNEMPYVLAVEKLAGIVVPDRVNTIRVMLSELFRINSHLLYISTFIQDVGAMTPVFFAFTDRQKVYDVIEAITGFRMHPAWFRIGGVAHDLPRGWERLLRDFLDWMPKRLDSYVKAALQNSILKGRSVGVAAYNAKEALEWGVTGAGLRATGVEFDVRKWRPYSGYENFDFEVPVGNNGDCYDRVMLKVEELRQSLRILEQCYKNMPEGPFKADHPLTTPPPKERTLQHIETLITHFLQVSWGPVMPANESFQMIEATKGINSYYLTSDGSTMSYRTRIRTPSYAHLQQIPSVIRGSLVSDLIVYLGSIDFVMSDVDR.

The tract at residues 1-189 (MTDLTTSDSL…DPYVLTKQKE (189 aa)) is NADH dehydrogenase I subunit C. The NADH dehydrogenase I subunit D stretch occupies residues 213 to 598 (DFMFLNLGPN…IDFVMSDVDR (386 aa)).

In the N-terminal section; belongs to the complex I 30 kDa subunit family. It in the C-terminal section; belongs to the complex I 49 kDa subunit family. As to quaternary structure, NDH-1 is composed of 13 different subunits. Subunits NuoB, CD, E, F, and G constitute the peripheral sector of the complex.

The protein resides in the cell inner membrane. The enzyme catalyses a quinone + NADH + 5 H(+)(in) = a quinol + NAD(+) + 4 H(+)(out). Functionally, NDH-1 shuttles electrons from NADH, via FMN and iron-sulfur (Fe-S) centers, to quinones in the respiratory chain. The immediate electron acceptor for the enzyme in this species is believed to be ubiquinone. Couples the redox reaction to proton translocation (for every two electrons transferred, four hydrogen ions are translocated across the cytoplasmic membrane), and thus conserves the redox energy in a proton gradient. This Yersinia pestis bv. Antiqua (strain Angola) protein is NADH-quinone oxidoreductase subunit C/D.